The primary structure comprises 110 residues: MAPMTAPTAMYTVPFGLSAAFKINGFPAVDGGVILATISDEEDVAPLEVEKAEDVNDGRDLELVSDTTLDVGFDRAVELVVVVTKVGRSLLTSDTDGIKFFLTISADVSF.

This is an uncharacterized protein from Saccharomyces cerevisiae (strain ATCC 204508 / S288c) (Baker's yeast).